The following is a 478-amino-acid chain: ATP synthase subunit beta (478 aa).

155 to 162 (GGAGVGKT) contacts ATP.

The protein belongs to the ATPase alpha/beta chains family. F-type ATPases have 2 components, CF(1) - the catalytic core - and CF(0) - the membrane proton channel. CF(1) has five subunits: alpha(3), beta(3), gamma(1), delta(1), epsilon(1). CF(0) has three main subunits: a(1), b(2) and c(9-12). The alpha and beta chains form an alternating ring which encloses part of the gamma chain. CF(1) is attached to CF(0) by a central stalk formed by the gamma and epsilon chains, while a peripheral stalk is formed by the delta and b chains.

The protein localises to the cell inner membrane. The enzyme catalyses ATP + H2O + 4 H(+)(in) = ADP + phosphate + 5 H(+)(out). Functionally, produces ATP from ADP in the presence of a proton gradient across the membrane. The catalytic sites are hosted primarily by the beta subunits. The sequence is that of ATP synthase subunit beta from Fuscovulum blasticum (Rhodobacter blasticus).